The sequence spans 555 residues: CCR4-NOT transcription complex subunit 6-like (555 aa).

The tract at residues 1–152 (MRLIGMPKEK…NLYQDPDGTR (152 aa)) is required for interaction with CNOT1, CNOT3 and CNOT7. LRR repeat units lie at residues 57-78 (HLTA…IAKL), 80-101 (NLVY…LGNM), 103-125 (SLRE…GRLF), and 126-148 (QLQT…YQDP). Residues 158–555 (MLDNLAVHPE…VNGVHLPNRR (398 aa)) form a nuclease domain region. A Mg(2+)-binding site is contributed by E240. 4 residues coordinate substrate: E240, E276, H360, and P365. D410 contacts Mg(2+). Catalysis depends on D410, which acts as the Proton donor/acceptor. Substrate-binding residues include N412, N479, and F484.

Belongs to the CCR4/nocturin family. In terms of assembly, component of the CCR4-NOT complex; distinct complexes seem to exist that differ in the participation of probably mutually exclusive catalytic subunits; the complex contains two deadenylase subunits, CNOT6 or CNOT6L, and CNOT7 or CNOT8. Interacts with CNOT1, CNOT3, CNOT7, CNOT8 and CNOT9. Interacts with TOB1. Interacts with NANOS2. Interacts with ZFP36. Interacts with ZFP36L2. Interacts with RBM46. It depends on Mg(2+) as a cofactor. Highly expressed in placenta, skeletal muscle, pancreas, testis and leukocytes. Weakly expressed in heart, spleen and thymus.

Its subcellular location is the cytoplasm. It localises to the nucleus. It carries out the reaction Exonucleolytic cleavage of poly(A) to 5'-AMP.. With respect to regulation, inhibited by free AMP, and with lesser efficiency also by CMP, GMP, UMP, ATP and neomycin. In terms of biological role, has 3'-5' poly(A) exoribonuclease activity for synthetic poly(A) RNA substrate. Catalytic component of the CCR4-NOT complex which is one of the major cellular mRNA deadenylases and is linked to various cellular processes including bulk mRNA degradation, miRNA-mediated repression, translational repression during translational initiation and general transcription regulation. Additional complex functions may be a consequence of its influence on mRNA expression. May be involved in the deadenylation-dependent degradation of mRNAs through the 3'-UTR AU-rich element-mediated mechanism. Involved in deadenylation-dependent degradation of CDKN1B mRNA. Its mRNA deadenylase activity can be inhibited by TOB1. Mediates cell proliferation and cell survival and prevents cellular senescence. The chain is CCR4-NOT transcription complex subunit 6-like (CNOT6L) from Homo sapiens (Human).